Consider the following 200-residue polypeptide: Glycerol-3-phosphate acyltransferase (200 aa).

The next 5 helical transmembrane spans lie at 2-22 (IHLLLVVAAYLLGSLSFAVIV), 51-71 (TAAILTLLGDALKGWVAVVAA), 84-104 (IVLLCALAAFIGHLFPVFFGF), 113-133 (ALGILVALDPWLGLACLATWV), and 143-163 (SLSALVTAVLAPVYAGLLLGW).

It belongs to the PlsY family. Probably interacts with PlsX.

The protein resides in the cell inner membrane. The catalysed reaction is an acyl phosphate + sn-glycerol 3-phosphate = a 1-acyl-sn-glycero-3-phosphate + phosphate. Its pathway is lipid metabolism; phospholipid metabolism. In terms of biological role, catalyzes the transfer of an acyl group from acyl-phosphate (acyl-PO(4)) to glycerol-3-phosphate (G3P) to form lysophosphatidic acid (LPA). This enzyme utilizes acyl-phosphate as fatty acyl donor, but not acyl-CoA or acyl-ACP. This chain is Glycerol-3-phosphate acyltransferase, found in Thiobacillus denitrificans (strain ATCC 25259 / T1).